The following is a 300-amino-acid chain: Homoserine kinase (300 aa).

82-92 (RPGSGLGSSAA) lines the ATP pocket.

The protein belongs to the GHMP kinase family. Homoserine kinase subfamily.

It localises to the cytoplasm. It carries out the reaction L-homoserine + ATP = O-phospho-L-homoserine + ADP + H(+). Its pathway is amino-acid biosynthesis; L-threonine biosynthesis; L-threonine from L-aspartate: step 4/5. Catalyzes the ATP-dependent phosphorylation of L-homoserine to L-homoserine phosphate. This chain is Homoserine kinase, found in Methanocella arvoryzae (strain DSM 22066 / NBRC 105507 / MRE50).